The primary structure comprises 405 residues: Putative colanic acid biosynthesis glycosyl transferase WcaC (405 aa).

Its pathway is slime biogenesis; slime polysaccharide biosynthesis. This Escherichia coli (strain K12) protein is Putative colanic acid biosynthesis glycosyl transferase WcaC (wcaC).